Here is a 298-residue protein sequence, read N- to C-terminus: 4-hydroxy-3-methylbut-2-enyl diphosphate reductase (298 aa).

C12 is a binding site for [4Fe-4S] cluster. Residues H40 and H78 each contribute to the (2E)-4-hydroxy-3-methylbut-2-enyl diphosphate site. Dimethylallyl diphosphate contacts are provided by H40 and H78. Isopentenyl diphosphate-binding residues include H40 and H78. C100 serves as a coordination point for [4Fe-4S] cluster. H128 lines the (2E)-4-hydroxy-3-methylbut-2-enyl diphosphate pocket. H128 lines the dimethylallyl diphosphate pocket. H128 serves as a coordination point for isopentenyl diphosphate. The Proton donor role is filled by E130. T171 is a binding site for (2E)-4-hydroxy-3-methylbut-2-enyl diphosphate. Residue C200 participates in [4Fe-4S] cluster binding. Positions 228, 229, 230, and 270 each coordinate (2E)-4-hydroxy-3-methylbut-2-enyl diphosphate. Dimethylallyl diphosphate contacts are provided by S228, S229, N230, and S270. Residues S228, S229, N230, and S270 each contribute to the isopentenyl diphosphate site.

It belongs to the IspH family. [4Fe-4S] cluster serves as cofactor.

It carries out the reaction isopentenyl diphosphate + 2 oxidized [2Fe-2S]-[ferredoxin] + H2O = (2E)-4-hydroxy-3-methylbut-2-enyl diphosphate + 2 reduced [2Fe-2S]-[ferredoxin] + 2 H(+). The catalysed reaction is dimethylallyl diphosphate + 2 oxidized [2Fe-2S]-[ferredoxin] + H2O = (2E)-4-hydroxy-3-methylbut-2-enyl diphosphate + 2 reduced [2Fe-2S]-[ferredoxin] + 2 H(+). The protein operates within isoprenoid biosynthesis; dimethylallyl diphosphate biosynthesis; dimethylallyl diphosphate from (2E)-4-hydroxy-3-methylbutenyl diphosphate: step 1/1. It functions in the pathway isoprenoid biosynthesis; isopentenyl diphosphate biosynthesis via DXP pathway; isopentenyl diphosphate from 1-deoxy-D-xylulose 5-phosphate: step 6/6. Its function is as follows. Catalyzes the conversion of 1-hydroxy-2-methyl-2-(E)-butenyl 4-diphosphate (HMBPP) into a mixture of isopentenyl diphosphate (IPP) and dimethylallyl diphosphate (DMAPP). Acts in the terminal step of the DOXP/MEP pathway for isoprenoid precursor biosynthesis. The polypeptide is 4-hydroxy-3-methylbut-2-enyl diphosphate reductase (Kosmotoga olearia (strain ATCC BAA-1733 / DSM 21960 / TBF 19.5.1)).